The chain runs to 105 residues: MFAVIKTGGKQYRVAANDVITIGKLEGDAGTAVTFGEVLLYADGDGATKVGAPTVAGVSVAGEIVAQTRGPKVIAFKKRRRQNSRRKRGHRQDFTVVRVTGISAA.

The protein belongs to the bacterial ribosomal protein bL21 family. Part of the 50S ribosomal subunit. Contacts protein L20.

This protein binds to 23S rRNA in the presence of protein L20. In Methylobacterium sp. (strain 4-46), this protein is Large ribosomal subunit protein bL21.